An 81-amino-acid polypeptide reads, in one-letter code: Small ribosomal subunit protein bS18 (81 aa).

The protein belongs to the bacterial ribosomal protein bS18 family. In terms of assembly, part of the 30S ribosomal subunit. Forms a tight heterodimer with protein bS6.

Its function is as follows. Binds as a heterodimer with protein bS6 to the central domain of the 16S rRNA, where it helps stabilize the platform of the 30S subunit. This Rubrobacter xylanophilus (strain DSM 9941 / JCM 11954 / NBRC 16129 / PRD-1) protein is Small ribosomal subunit protein bS18.